The chain runs to 203 residues: Cardiotrophin-1 (203 aa).

This sequence belongs to the IL-6 superfamily. Highly expressed in heart, skeletal muscle, liver, lung and kidney. Lower levels in testis and brain. No expression in spleen.

It localises to the secreted. Its function is as follows. Induces cardiac myocyte hypertrophy in vitro. Binds to and activates the ILST/gp130 receptor. This Mus musculus (Mouse) protein is Cardiotrophin-1 (Ctf1).